A 239-amino-acid polypeptide reads, in one-letter code: uncharacterized protein (239 aa).

The segment at 129–155 (DSLDDEDDNMISSNDPTKSPEEHDTTT) is disordered. Position 160 is a phosphoserine (Ser160).

This is an uncharacterized protein from Schizosaccharomyces pombe (strain 972 / ATCC 24843) (Fission yeast).